The following is a 109-amino-acid chain: U4-lycotoxin-Ls1d (109 aa).

An N-terminal signal peptide occupies residues 1 to 22; sequence MKVLVLFSVLFLTLFSYSSTEA. Positions 23–44 are excised as a propeptide; sequence MDEFDSDAEEDMLSLMANEQVR. Residues 45-88 are knottin domain; it reads AKACTPRLHDCSHDRHSCCRGELFKDVCYCFYPEGEDKTEVCSC. Disulfide bonds link cysteine 48–cysteine 63, cysteine 55–cysteine 72, cysteine 62–cysteine 88, and cysteine 74–cysteine 86. A linear cationic cytotoxin domain region spans residues 89–108; that stretch reads QQPKSHKYIEKVVDKARTVV.

This sequence belongs to the neurotoxin 19 (CSTX) family. 05 (U4-Lctx) subfamily. Expressed by the venom gland.

The protein localises to the secreted. Its function is as follows. Enhances the high-affinity desensitization of human P2RX3 purinoceptors. This chain is U4-lycotoxin-Ls1d, found in Lycosa singoriensis (Wolf spider).